A 126-amino-acid polypeptide reads, in one-letter code: Histone H2B type 1-K (126 aa).

Positions 1 to 12 are enriched in low complexity; it reads MPEPAKSAPAPK. The disordered stretch occupies residues 1–36; that stretch reads MPEPAKSAPAPKKGSKKAVTKAQKKDGKKRKRSRKE. At proline 2 the chain carries N-acetylproline. Residue glutamate 3 is modified to ADP-ribosyl glutamic acid. The residue at position 6 (lysine 6) is an N6-(2-hydroxyisobutyryl)lysine; alternate. Residue lysine 6 is modified to N6-(beta-hydroxybutyryl)lysine; alternate. Lysine 6 bears the N6-acetyllysine; alternate mark. The residue at position 6 (lysine 6) is an N6-butyryllysine; alternate. Position 6 is an N6-crotonyllysine; alternate (lysine 6). Position 6 is an N6-lactoyllysine; alternate (lysine 6). Residue lysine 6 forms a Glycyl lysine isopeptide (Lys-Gly) (interchain with G-Cter in SUMO2); alternate linkage. Residue serine 7 is modified to ADP-ribosylserine. Lysine 12 carries the post-translational modification N6-(beta-hydroxybutyryl)lysine; alternate. Residues lysine 12 and lysine 13 each carry the N6-acetyllysine; alternate modification. Lysine 12 and lysine 13 each carry N6-crotonyllysine; alternate. The residue at position 12 (lysine 12) is an N6-lactoyllysine; alternate. The residue at position 13 (lysine 13) is an N6-(2-hydroxyisobutyryl)lysine; alternate. Residue serine 15 is modified to Phosphoserine; by STK4/MST1. N6-acetyllysine; alternate occurs at positions 16, 17, 21, and 24. An N6-crotonyllysine; alternate mark is found at lysine 16, lysine 17, lysine 21, and lysine 24. N6-lactoyllysine; alternate occurs at positions 16, 17, 21, and 24. An N6-glutaryllysine; alternate modification is found at lysine 17. 2 positions are modified to N6-(2-hydroxyisobutyryl)lysine; alternate: lysine 21 and lysine 24. Residue lysine 21 is modified to N6-(beta-hydroxybutyryl)lysine; alternate. An N6-butyryllysine; alternate modification is found at lysine 21. Lysine 21 participates in a covalent cross-link: Glycyl lysine isopeptide (Lys-Gly) (interchain with G-Cter in SUMO2); alternate. Lysine 25 carries the post-translational modification N6-(2-hydroxyisobutyryl)lysine. Residue lysine 35 is modified to N6-(2-hydroxyisobutyryl)lysine; alternate. At lysine 35 the chain carries N6-(beta-hydroxybutyryl)lysine; alternate. Residue lysine 35 is modified to N6-crotonyllysine; alternate. An N6-glutaryllysine; alternate modification is found at lysine 35. An N6-succinyllysine; alternate modification is found at lysine 35. Lysine 35 participates in a covalent cross-link: Glycyl lysine isopeptide (Lys-Gly) (interchain with G-Cter in ubiquitin); alternate. Glutamate 36 is modified (polyADP-ribosyl glutamic acid). At serine 37 the chain carries Phosphoserine; by AMPK. Lysine 44, lysine 47, and lysine 58 each carry N6-(2-hydroxyisobutyryl)lysine; alternate. Lysine 44 is subject to N6-lactoyllysine; alternate. Residues lysine 44 and lysine 47 each carry the N6-glutaryllysine; alternate modification. Lysine 47 is subject to N6-methyllysine; alternate. At lysine 58 the chain carries N6,N6-dimethyllysine; alternate. Arginine 80 carries the dimethylated arginine modification. Lysine 86 is modified (N6-(2-hydroxyisobutyryl)lysine; alternate). Lysine 86 carries the post-translational modification N6-acetyllysine; alternate. Lysine 86 carries the post-translational modification N6-lactoyllysine; alternate. An N6,N6,N6-trimethyllysine; alternate modification is found at lysine 86. Omega-N-methylarginine occurs at positions 87 and 93. An N6-(2-hydroxyisobutyryl)lysine; alternate modification is found at lysine 109. Residue lysine 109 is modified to N6-(beta-hydroxybutyryl)lysine; alternate. At lysine 109 the chain carries N6-lactoyllysine; alternate. N6-glutaryllysine; alternate is present on lysine 109. Lysine 109 carries the N6-methyllysine; alternate modification. Serine 113 is a glycosylation site (O-linked (GlcNAc) serine). Phosphothreonine is present on threonine 116. N6-(2-hydroxyisobutyryl)lysine; alternate occurs at positions 117 and 121. Lysine 117 is modified (N6-(beta-hydroxybutyryl)lysine; alternate). An N6-lactoyllysine; alternate mark is found at lysine 117 and lysine 121. N6-glutaryllysine; alternate is present on residues lysine 117 and lysine 121. An N6-succinyllysine; alternate mark is found at lysine 117 and lysine 121. An N6-methylated lysine; alternate modification is found at lysine 117. Lysine 121 is covalently cross-linked (Glycyl lysine isopeptide (Lys-Gly) (interchain with G-Cter in ubiquitin); alternate).

The protein belongs to the histone H2B family. In terms of assembly, the nucleosome is a histone octamer containing two molecules each of H2A, H2B, H3 and H4 assembled in one H3-H4 heterotetramer and two H2A-H2B heterodimers. The octamer wraps approximately 147 bp of DNA. Post-translationally, monoubiquitination at Lys-35 (H2BK34Ub) by the MSL1/MSL2 dimer is required for histone H3 'Lys-4' (H3K4me) and 'Lys-79' (H3K79me) methylation and transcription activation at specific gene loci, such as HOXA9 and MEIS1 loci. Similarly, monoubiquitination at Lys-121 (H2BK120Ub) by the RNF20/40 complex gives a specific tag for epigenetic transcriptional activation and is also prerequisite for histone H3 'Lys-4' and 'Lys-79' methylation. It also functions cooperatively with the FACT dimer to stimulate elongation by RNA polymerase II. H2BK120Ub also acts as a regulator of mRNA splicing: deubiquitination by USP49 is required for efficient cotranscriptional splicing of a large set of exons. In terms of processing, phosphorylated on Ser-15 (H2BS14ph) by STK4/MST1 during apoptosis; which facilitates apoptotic chromatin condensation. Also phosphorylated on Ser-15 in response to DNA double strand breaks (DSBs), and in correlation with somatic hypermutation and immunoglobulin class-switch recombination. Phosphorylation at Ser-37 (H2BS36ph) by AMPK in response to stress promotes transcription. GlcNAcylation at Ser-113 promotes monoubiquitination of Lys-121. It fluctuates in response to extracellular glucose, and associates with transcribed genes. Post-translationally, ADP-ribosylated by PARP1 or PARP2 on Ser-7 (H2BS6ADPr) in response to DNA damage. H2BS6ADPr promotes recruitment of CHD1L. Mono-ADP-ribosylated on Glu-3 (H2BE2ADPr) by PARP3 in response to single-strand breaks. Poly ADP-ribosylation on Glu-36 (H2BE35ADPr) by PARP1 regulates adipogenesis: it inhibits phosphorylation at Ser-37 (H2BS36ph), thereby blocking expression of pro-adipogenetic genes. In terms of processing, crotonylation (Kcr) is specifically present in male germ cells and marks testis-specific genes in post-meiotic cells, including X-linked genes that escape sex chromosome inactivation in haploid cells. Crotonylation marks active promoters and enhancers and confers resistance to transcriptional repressors. It is also associated with post-meiotically activated genes on autosomes. Hydroxybutyrylation of histones is induced by starvation. Post-translationally, lactylated in macrophages by EP300/P300 by using lactoyl-CoA directly derived from endogenous or exogenous lactate, leading to stimulates gene transcription.

It is found in the nucleus. The protein resides in the chromosome. Functionally, core component of nucleosome. Nucleosomes wrap and compact DNA into chromatin, limiting DNA accessibility to the cellular machineries which require DNA as a template. Histones thereby play a central role in transcription regulation, DNA repair, DNA replication and chromosomal stability. DNA accessibility is regulated via a complex set of post-translational modifications of histones, also called histone code, and nucleosome remodeling. This Mus musculus (Mouse) protein is Histone H2B type 1-K.